Consider the following 40-residue polypeptide: Photosystem II reaction center protein J (40 aa).

A helical transmembrane segment spans residues 8–28; the sequence is IPLWLIGTVTGIPVIGSMGIF.

This sequence belongs to the PsbJ family. As to quaternary structure, PSII is composed of 1 copy each of membrane proteins PsbA, PsbB, PsbC, PsbD, PsbE, PsbF, PsbH, PsbI, PsbJ, PsbK, PsbL, PsbM, PsbT, PsbX, PsbY, PsbZ, Psb30/Ycf12, at least 3 peripheral proteins of the oxygen-evolving complex and a large number of cofactors. It forms dimeric complexes.

The protein localises to the plastid. It is found in the chloroplast thylakoid membrane. In terms of biological role, one of the components of the core complex of photosystem II (PSII). PSII is a light-driven water:plastoquinone oxidoreductase that uses light energy to abstract electrons from H(2)O, generating O(2) and a proton gradient subsequently used for ATP formation. It consists of a core antenna complex that captures photons, and an electron transfer chain that converts photonic excitation into a charge separation. In Illicium oligandrum (Star anise), this protein is Photosystem II reaction center protein J.